The chain runs to 107 residues: Magnetosome protein MmsF (107 aa).

Over 1–13 the chain is Cytoplasmic; the sequence is MTEAILRSTLGAR. The chain crosses the membrane as a helical span at residues 14–34; it reads TTVMAALSYLSVLCFVPLLVD. Over 35 to 46 the chain is Lumenal; sequence RDDEFVYFHAKQ. The chain crosses the membrane as a helical span at residues 47-67; it reads GLVIWMWGVLALFALHVPVLG. Residues 68 to 69 lie on the Cytoplasmic side of the membrane; it reads KW. A helical transmembrane segment spans residues 70–90; sequence IFGFSSMGVLVFSLLGLVSVV. Residues 91–107 lie on the Lumenal side of the membrane; the sequence is FQRAWKLPLISWVAHRI.

It belongs to the magnetosome MamF/MmsF protein family. As to quaternary structure, may oligomerize.

The protein resides in the magnetosome membrane. Its activity is regulated as follows. Its function may be negatively regulated by one of the MamGFDC proteins. Functionally, plays a major role in synthesis of cubooctahedral magnetite crystals by controlling crystal growth and morphology after nucleation. Has a partially redundant function with MamF. When overexpressed in E.coli the soluble protein self assembles into shells of about 36 nm. This protein mediates the formation of magnetite nanoparticles from a solution of Fe(2+) and Fe(3+) sulfate; the crystals are larger and lack alternative iron oxide/oxyhydroxide species seen in the protein's absence. This is Magnetosome protein MmsF from Paramagnetospirillum magneticum (strain ATCC 700264 / AMB-1) (Magnetospirillum magneticum).